A 328-amino-acid polypeptide reads, in one-letter code: Small ribosomal subunit protein bS1A (328 aa).

3 consecutive S1 motif domains span residues 31–100 (GDIV…LSIR), 118–182 (DATV…LSHR), and 196–264 (AQVV…LSTK). The segment at 298-328 (EAQGIPYEPPTSVDDTDDEEDESLAVSAVDE) is disordered. Over residues 311–328 (DDTDDEEDESLAVSAVDE) the composition is skewed to acidic residues.

It belongs to the bacterial ribosomal protein bS1 family.

Its function is as follows. Binds mRNA. This Synechocystis sp. (strain ATCC 27184 / PCC 6803 / Kazusa) protein is Small ribosomal subunit protein bS1A (rps1A).